Consider the following 322-residue polypeptide: 4-hydroxythreonine-4-phosphate dehydrogenase (322 aa).

Histidine 131 and threonine 132 together coordinate substrate. A divalent metal cation-binding residues include histidine 161, histidine 206, and histidine 259. 3 residues coordinate substrate: lysine 267, asparagine 276, and arginine 285.

The protein belongs to the PdxA family. As to quaternary structure, homodimer. The cofactor is a divalent metal cation.

Its subcellular location is the cytoplasm. It catalyses the reaction 4-(phosphooxy)-L-threonine + NAD(+) = 3-amino-2-oxopropyl phosphate + CO2 + NADH. It participates in cofactor biosynthesis; pyridoxine 5'-phosphate biosynthesis; pyridoxine 5'-phosphate from D-erythrose 4-phosphate: step 4/5. Catalyzes the NAD(P)-dependent oxidation of 4-(phosphooxy)-L-threonine (HTP) into 2-amino-3-oxo-4-(phosphooxy)butyric acid which spontaneously decarboxylates to form 3-amino-2-oxopropyl phosphate (AHAP). The chain is 4-hydroxythreonine-4-phosphate dehydrogenase from Sulfurihydrogenibium sp. (strain YO3AOP1).